Consider the following 280-residue polypeptide: Hydroxyacylglutathione hydrolase, mitochondrial (280 aa).

An N6-acetyllysine modification is found at Lys61. Zn(2+) is bound by residues His74, His76, Asp78, and His79. Lys88 carries the post-translational modification N6-acetyllysine. 2 residues coordinate Zn(2+): His130 and Asp154. Residues 163–165 (KFY) and 193–195 (HEY) each bind substrate. Residue His193 participates in Zn(2+) binding. Lys201 carries the post-translational modification N6-acetyllysine; alternate. An N6-succinyllysine; alternate modification is found at Lys201. 269–272 (RREK) provides a ligand contact to substrate.

This sequence belongs to the metallo-beta-lactamase superfamily. Glyoxalase II family. As to quaternary structure, monomer. Requires Zn(2+) as cofactor. Testis.

The protein localises to the mitochondrion matrix. It is found in the cytoplasm. The enzyme catalyses an S-(2-hydroxyacyl)glutathione + H2O = a 2-hydroxy carboxylate + glutathione + H(+). The catalysed reaction is (R)-S-lactoylglutathione + H2O = (R)-lactate + glutathione + H(+). The protein operates within secondary metabolite metabolism; methylglyoxal degradation; (R)-lactate from methylglyoxal: step 2/2. Thiolesterase that catalyzes the hydrolysis of S-D-lactoyl-glutathione to form glutathione and D-lactic acid. In Callithrix jacchus (White-tufted-ear marmoset), this protein is Hydroxyacylglutathione hydrolase, mitochondrial (HAGH).